A 410-amino-acid chain; its full sequence is 2,3-bisphosphoglycerate-independent phosphoglycerate mutase (410 aa).

Belongs to the BPG-independent phosphoglycerate mutase family. A-PGAM subfamily.

The catalysed reaction is (2R)-2-phosphoglycerate = (2R)-3-phosphoglycerate. Its pathway is carbohydrate degradation; glycolysis; pyruvate from D-glyceraldehyde 3-phosphate: step 3/5. Catalyzes the interconversion of 2-phosphoglycerate and 3-phosphoglycerate. The protein is 2,3-bisphosphoglycerate-independent phosphoglycerate mutase of Pyrococcus abyssi (strain GE5 / Orsay).